The chain runs to 699 residues: Catalase-peroxidase (699 aa).

The tryptophyl-tyrosyl-methioninium (Trp-Tyr) (with M-226) cross-link spans tryptophan 72–tyrosine 200. Histidine 73 functions as the Proton acceptor in the catalytic mechanism. A cross-link (tryptophyl-tyrosyl-methioninium (Tyr-Met) (with W-72)) is located at residues tyrosine 200–methionine 226. Histidine 241 contacts heme b.

The protein belongs to the peroxidase family. Peroxidase/catalase subfamily. In terms of assembly, homodimer or homotetramer. Heme b serves as cofactor. Formation of the three residue Trp-Tyr-Met cross-link is important for the catalase, but not the peroxidase activity of the enzyme.

The catalysed reaction is H2O2 + AH2 = A + 2 H2O. The enzyme catalyses 2 H2O2 = O2 + 2 H2O. Its function is as follows. Bifunctional enzyme with both catalase and broad-spectrum peroxidase activity. In Aeromonas salmonicida (strain A449), this protein is Catalase-peroxidase.